A 227-amino-acid polypeptide reads, in one-letter code: Lectin (227 aa).

An N-terminal signal peptide occupies residues 1–28 (MTMTSTTTKAMAMAAAVLAAAAVAATNA). Q29 is subject to Pyrrolidone carboxylic acid. 4 Chitin-binding type-1 domains span residues 29-70 (QTCG…ACCS), 71-113 (SQRC…PCRA), 114-156 (DIKC…ACCP), and 157-199 (EKRC…GCYK). 16 disulfides stabilise this stretch: C31/C46, C40/C52, C45/C59, C63/C68, C74/C89, C83/C95, C88/C102, C106/C111, C117/C132, C126/C138, C131/C145, C149/C154, C160/C175, C169/C181, C174/C188, and C192/C197. 38 to 40 (MIC) is a binding site for substrate. Residue 90 to 101 (SQYGYCGFGSEY) coordinates substrate. Residue 142–143 (SE) coordinates substrate. A propeptide spanning residues 202-227 (DGMAAILANNQSVSFEGIIESVAELV) is cleaved from the precursor. An N-linked (GlcNAc...) asparagine glycan is attached at N211.

Functionally, N-acetyl-D-glucosamine binding lectin. In Oryza sativa subsp. indica (Rice), this protein is Lectin.